A 141-amino-acid chain; its full sequence is Hemoglobin subunit alpha-3 (141 aa).

Ser-1 is modified (N-acetylserine). Residues 1 to 141 (SLSASEKAAV…VSAVLTSKYR (141 aa)) enclose the Globin domain. An O2-binding site is contributed by His-58. His-87 is a binding site for heme b.

It belongs to the globin family. In terms of assembly, heterotetramer of two alpha chains and two beta chains. As to expression, red blood cells.

In terms of biological role, this is a tadpole (larval) alpha chain. This chain is Hemoglobin subunit alpha-3, found in Aquarana catesbeiana (American bullfrog).